Here is a 399-residue protein sequence, read N- to C-terminus: Dual-specificity RNA methyltransferase RlmN (399 aa).

E122 (proton acceptor) is an active-site residue. In terms of domain architecture, Radical SAM core spans 128–371 (ETDRGTLCVS…VRTPRGRDIL (244 aa)). A disulfide bridge links C135 with C374. Positions 142, 146, and 149 each coordinate [4Fe-4S] cluster. Residues 200-201 (GE), S232, 254-256 (SLH), and N331 each bind S-adenosyl-L-methionine. C374 acts as the S-methylcysteine intermediate in catalysis.

This sequence belongs to the radical SAM superfamily. RlmN family. Requires [4Fe-4S] cluster as cofactor.

It is found in the cytoplasm. It carries out the reaction adenosine(2503) in 23S rRNA + 2 reduced [2Fe-2S]-[ferredoxin] + 2 S-adenosyl-L-methionine = 2-methyladenosine(2503) in 23S rRNA + 5'-deoxyadenosine + L-methionine + 2 oxidized [2Fe-2S]-[ferredoxin] + S-adenosyl-L-homocysteine. The catalysed reaction is adenosine(37) in tRNA + 2 reduced [2Fe-2S]-[ferredoxin] + 2 S-adenosyl-L-methionine = 2-methyladenosine(37) in tRNA + 5'-deoxyadenosine + L-methionine + 2 oxidized [2Fe-2S]-[ferredoxin] + S-adenosyl-L-homocysteine. In terms of biological role, specifically methylates position 2 of adenine 2503 in 23S rRNA and position 2 of adenine 37 in tRNAs. m2A2503 modification seems to play a crucial role in the proofreading step occurring at the peptidyl transferase center and thus would serve to optimize ribosomal fidelity. This Rhodopseudomonas palustris (strain HaA2) protein is Dual-specificity RNA methyltransferase RlmN.